A 292-amino-acid chain; its full sequence is tRNA (adenine(9)-N1)-methyltransferase (292 aa).

Residues 72 to 253 enclose the SAM-dependent MTase TRM10-type domain; it reads TFRKGGKKVS…ISLQSKSDKI (182 aa).

It belongs to the class IV-like SAM-binding methyltransferase superfamily. TRM10 family.

The protein resides in the cytoplasm. It catalyses the reaction adenosine(9) in tRNA + S-adenosyl-L-methionine = N(1)-methyladenosine(9) in tRNA + S-adenosyl-L-homocysteine + H(+). Its function is as follows. Catalyzes the S-adenosyl-L-methionine-dependent formation of N(1)-methyladenine at position 9 (m1A9) in tRNA. In Sulfolobus acidocaldarius (strain ATCC 33909 / DSM 639 / JCM 8929 / NBRC 15157 / NCIMB 11770), this protein is tRNA (adenine(9)-N1)-methyltransferase.